The following is a 2242-amino-acid chain: Multifunctional protein CAD (2242 aa).

Residues 1-365 form a GATase (Glutamine amidotransferase) region; it reads MATLFLDDGS…CARDVKLGVN (365 aa). Residues S44, G222, and G224 each contribute to the L-glutamine site. In terms of domain architecture, Glutamine amidotransferase type-1 spans 177 to 363; sequence KIMAVDCGMK…LECARDVKLG (187 aa). C252 functions as the Nucleophile; for GATase activity in the catalytic mechanism. The L-glutamine site is built by L253, Q256, N294, G296, and F297. Residues H336 and E338 each act as for GATase activity in the active site. Residues 366-397 form a linker region; it reads LDKTVKGRVISHYSFKNGTENSKTPPGRIQPH. A CPSase A region spans residues 398-937; that stretch reads KVLILGSGGL…GEGHDLDFTK (540 aa). The CPSase (Carbamoyl-phosphate synthase) stretch occupies residues 398 to 1462; it reads KVLILGSGGL…TPPVKTHIDS (1065 aa). 11 residues coordinate ATP: R518, R558, G564, G565, K595, E602, G628, I629, H630, Q671, and E685. ATP-grasp domains follow at residues 522–714 and 1057–1248; these read VEKM…KLAL and SRML…KVIM. Mg(2+) is bound by residues Q671, E685, and N687. The Mn(2+) site is built by Q671, E685, and N687. Residues 938 to 1462 form a CPSase B region; it reads PHVMVIGSGV…TPPVKTHIDS (525 aa). Residues R1093, K1132, I1134, E1139, G1164, V1165, H1166, S1167, Q1207, and E1219 each contribute to the ATP site. Mg(2+)-binding residues include Q1207, E1219, and N1221. 3 residues coordinate Mn(2+): Q1207, E1219, and N1221. Residues 1313-1469 enclose the MGS-like domain; sequence FKIPKKNILL…IDSMSSHKLI (157 aa). Residues 1463-1796 are DHOase (dihydroorotase); sequence MSSHKLIRLP…KGRVRRVVLR (334 aa). Positions 1478 and 1480 each coordinate Zn(2+). The (S)-dihydroorotate site is built by R1482 and N1512. Positions 1563, 1597, 1620, 1621, and 1644 each coordinate Zn(2+). Position 1563 is an N6-carboxylysine (K1563). R1668 lines the (S)-dihydroorotate pocket. D1693 provides a ligand contact to Zn(2+). The active-site For DHOase activity is the D1693. Residues H1697 and P1709 each coordinate (S)-dihydroorotate. The tract at residues 1797-1934 is linker; it reads GEVAYIDGQV…QAVPHPYSLL (138 aa). The disordered stretch occupies residues 1829-1862; that stretch reads PTTVKTPEHSKPTQTETVRTRTASPRRLASSGPA. Residues 1840-1851 show a composition bias toward polar residues; the sequence is PTQTETVRTRTA. An ATCase (Aspartate transcarbamylase) region spans residues 1935–2242; sequence LHPFVGQHIL…ALLATVLGKF (308 aa). Positions 1992 and 1993 each coordinate carbamoyl phosphate. L-aspartate is bound at residue K2020. Carbamoyl phosphate is bound by residues R2041, H2069, and Q2072. Positions 2102 and 2163 each coordinate L-aspartate. The carbamoyl phosphate site is built by L2202 and P2203.

The protein in the N-terminal section; belongs to the CarA family. In the 2nd section; belongs to the CarB family. It in the 3rd section; belongs to the metallo-dependent hydrolases superfamily. DHOase family. CAD subfamily. This sequence in the C-terminal section; belongs to the aspartate/ornithine carbamoyltransferase superfamily. ATCase family. In terms of assembly, homohexamer. It depends on Mg(2+) as a cofactor. Mn(2+) is required as a cofactor. The cofactor is Zn(2+). As to expression, present in the testis but not in the liver.

Its subcellular location is the cytoplasm. The protein resides in the nucleus. It catalyses the reaction hydrogencarbonate + L-glutamine + 2 ATP + H2O = carbamoyl phosphate + L-glutamate + 2 ADP + phosphate + 2 H(+). It carries out the reaction L-glutamine + H2O = L-glutamate + NH4(+). The catalysed reaction is hydrogencarbonate + NH4(+) + 2 ATP = carbamoyl phosphate + 2 ADP + phosphate + 2 H(+). The enzyme catalyses carbamoyl phosphate + L-aspartate = N-carbamoyl-L-aspartate + phosphate + H(+). It catalyses the reaction (S)-dihydroorotate + H2O = N-carbamoyl-L-aspartate + H(+). Its pathway is pyrimidine metabolism; UMP biosynthesis via de novo pathway; (S)-dihydroorotate from bicarbonate: step 1/3. It participates in pyrimidine metabolism; UMP biosynthesis via de novo pathway; (S)-dihydroorotate from bicarbonate: step 2/3. The protein operates within pyrimidine metabolism; UMP biosynthesis via de novo pathway; (S)-dihydroorotate from bicarbonate: step 3/3. Its activity is regulated as follows. Allosterically regulated and controlled by phosphorylation. 5-phosphoribose 1-diphosphate is an activator while UMP is an inhibitor of the CPSase reaction. Multifunctional protein that encodes the first 3 enzymatic activities of the de novo pyrimidine pathway: carbamoylphosphate synthetase (CPSase; EC 6.3.5.5), aspartate transcarbamylase (ATCase; EC 2.1.3.2) and dihydroorotase (DHOase; EC 3.5.2.3). The CPSase-function is accomplished in 2 steps, by a glutamine-dependent amidotransferase activity (GATase) that binds and cleaves glutamine to produce ammonia, followed by an ammonium-dependent carbamoyl phosphate synthetase, which reacts with the ammonia, hydrogencarbonate and ATP to form carbamoyl phosphate. The endogenously produced carbamoyl phosphate is sequestered and channeled to the ATCase active site. ATCase then catalyzes the formation of carbamoyl-L-aspartate from L-aspartate and carbamoyl phosphate. In the last step, DHOase catalyzes the cyclization of carbamoyl aspartate to dihydroorotate. This is Multifunctional protein CAD (CAD) from Squalus acanthias (Spiny dogfish).